We begin with the raw amino-acid sequence, 203 residues long: uncharacterized protein (203 aa).

Belongs to the DadA oxidoreductase family.

In terms of biological role, either a functional dehydrogenase or a non-functional fragment. This is an uncharacterized protein from Sinorhizobium fredii (strain NBRC 101917 / NGR234).